Reading from the N-terminus, the 718-residue chain is Phenylalanine--tRNA ligase beta subunit (718 aa).

In terms of domain architecture, tRNA-binding spans 40–153 (FLNVSKIKFG…KADLKQDPID (114 aa)). The B5 domain occupies 387-462 (DKKESFNFVW…RFYGYENLVF (76 aa)). Positions 440, 446, 449, and 450 each coordinate Mg(2+).

Belongs to the phenylalanyl-tRNA synthetase beta subunit family. Type 1 subfamily. Tetramer of two alpha and two beta subunits. Requires Mg(2+) as cofactor.

Its subcellular location is the cytoplasm. The catalysed reaction is tRNA(Phe) + L-phenylalanine + ATP = L-phenylalanyl-tRNA(Phe) + AMP + diphosphate + H(+). The polypeptide is Phenylalanine--tRNA ligase beta subunit (Mycoplasmopsis pulmonis (strain UAB CTIP) (Mycoplasma pulmonis)).